A 302-amino-acid chain; its full sequence is Sulfate adenylyltransferase subunit 2 (302 aa).

It belongs to the PAPS reductase family. CysD subfamily. In terms of assembly, heterodimer composed of CysD, the smaller subunit, and CysN.

It catalyses the reaction sulfate + ATP + H(+) = adenosine 5'-phosphosulfate + diphosphate. Its pathway is sulfur metabolism; hydrogen sulfide biosynthesis; sulfite from sulfate: step 1/3. Its function is as follows. With CysN forms the ATP sulfurylase (ATPS) that catalyzes the adenylation of sulfate producing adenosine 5'-phosphosulfate (APS) and diphosphate, the first enzymatic step in sulfur assimilation pathway. APS synthesis involves the formation of a high-energy phosphoric-sulfuric acid anhydride bond driven by GTP hydrolysis by CysN coupled to ATP hydrolysis by CysD. This is Sulfate adenylyltransferase subunit 2 from Xanthomonas campestris pv. campestris (strain 8004).